A 464-amino-acid chain; its full sequence is ATP synthase subunit beta (464 aa).

Glycine 153–threonine 160 contacts ATP.

The protein belongs to the ATPase alpha/beta chains family. F-type ATPases have 2 components, CF(1) - the catalytic core - and CF(0) - the membrane proton channel. CF(1) has five subunits: alpha(3), beta(3), gamma(1), delta(1), epsilon(1). CF(0) has three main subunits: a(1), b(2) and c(9-12). The alpha and beta chains form an alternating ring which encloses part of the gamma chain. CF(1) is attached to CF(0) by a central stalk formed by the gamma and epsilon chains, while a peripheral stalk is formed by the delta and b chains.

It is found in the cell inner membrane. It carries out the reaction ATP + H2O + 4 H(+)(in) = ADP + phosphate + 5 H(+)(out). Functionally, produces ATP from ADP in the presence of a proton gradient across the membrane. The catalytic sites are hosted primarily by the beta subunits. The polypeptide is ATP synthase subunit beta (Burkholderia orbicola (strain MC0-3)).